The chain runs to 457 residues: Bifunctional protein GlmU (457 aa).

The tract at residues 1 to 230 (MSKRYAVVLA…FEESLGVNDR (230 aa)) is pyrophosphorylase. UDP-N-acetyl-alpha-D-glucosamine is bound by residues 9 to 12 (LAAG), Lys-23, Gln-73, and 78 to 79 (GT). Asp-103 serves as a coordination point for Mg(2+). UDP-N-acetyl-alpha-D-glucosamine is bound by residues Gly-140, Glu-155, Asn-170, and Asn-228. Asn-228 serves as a coordination point for Mg(2+). Residues 231 to 251 (IALAEASKLMQRRINENHMRN) form a linker region. The N-acetyltransferase stretch occupies residues 252-457 (GVTLVNPENT…GYAKHLNHGK (206 aa)). Positions 333 and 351 each coordinate UDP-N-acetyl-alpha-D-glucosamine. The Proton acceptor role is filled by His-363. Residues Tyr-366 and Asn-377 each coordinate UDP-N-acetyl-alpha-D-glucosamine. Acetyl-CoA is bound by residues 386 to 387 (NY), Ala-423, and Arg-440.

This sequence in the N-terminal section; belongs to the N-acetylglucosamine-1-phosphate uridyltransferase family. In the C-terminal section; belongs to the transferase hexapeptide repeat family. Homotrimer. Requires Mg(2+) as cofactor.

The protein localises to the cytoplasm. It carries out the reaction alpha-D-glucosamine 1-phosphate + acetyl-CoA = N-acetyl-alpha-D-glucosamine 1-phosphate + CoA + H(+). The catalysed reaction is N-acetyl-alpha-D-glucosamine 1-phosphate + UTP + H(+) = UDP-N-acetyl-alpha-D-glucosamine + diphosphate. It participates in nucleotide-sugar biosynthesis; UDP-N-acetyl-alpha-D-glucosamine biosynthesis; N-acetyl-alpha-D-glucosamine 1-phosphate from alpha-D-glucosamine 6-phosphate (route II): step 2/2. It functions in the pathway nucleotide-sugar biosynthesis; UDP-N-acetyl-alpha-D-glucosamine biosynthesis; UDP-N-acetyl-alpha-D-glucosamine from N-acetyl-alpha-D-glucosamine 1-phosphate: step 1/1. Its pathway is bacterial outer membrane biogenesis; LPS lipid A biosynthesis. Its function is as follows. Catalyzes the last two sequential reactions in the de novo biosynthetic pathway for UDP-N-acetylglucosamine (UDP-GlcNAc). The C-terminal domain catalyzes the transfer of acetyl group from acetyl coenzyme A to glucosamine-1-phosphate (GlcN-1-P) to produce N-acetylglucosamine-1-phosphate (GlcNAc-1-P), which is converted into UDP-GlcNAc by the transfer of uridine 5-monophosphate (from uridine 5-triphosphate), a reaction catalyzed by the N-terminal domain. The chain is Bifunctional protein GlmU from Listeria innocua serovar 6a (strain ATCC BAA-680 / CLIP 11262).